The primary structure comprises 339 residues: Phosphate acyltransferase (339 aa).

This sequence belongs to the PlsX family. As to quaternary structure, homodimer. Probably interacts with PlsY.

The protein resides in the cytoplasm. It catalyses the reaction a fatty acyl-[ACP] + phosphate = an acyl phosphate + holo-[ACP]. Its pathway is lipid metabolism; phospholipid metabolism. Its function is as follows. Catalyzes the reversible formation of acyl-phosphate (acyl-PO(4)) from acyl-[acyl-carrier-protein] (acyl-ACP). This enzyme utilizes acyl-ACP as fatty acyl donor, but not acyl-CoA. The polypeptide is Phosphate acyltransferase (Helicobacter pylori (strain Shi470)).